We begin with the raw amino-acid sequence, 89 residues long: Small ribosomal subunit protein uS15 (89 aa).

This sequence belongs to the universal ribosomal protein uS15 family. In terms of assembly, part of the 30S ribosomal subunit. Forms a bridge to the 50S subunit in the 70S ribosome, contacting the 23S rRNA.

Functionally, one of the primary rRNA binding proteins, it binds directly to 16S rRNA where it helps nucleate assembly of the platform of the 30S subunit by binding and bridging several RNA helices of the 16S rRNA. Its function is as follows. Forms an intersubunit bridge (bridge B4) with the 23S rRNA of the 50S subunit in the ribosome. The chain is Small ribosomal subunit protein uS15 from Latilactobacillus sakei subsp. sakei (strain 23K) (Lactobacillus sakei subsp. sakei).